The primary structure comprises 425 residues: Glucose-6-phosphate 1-dehydrogenase (425 aa).

NADP(+) is bound by residues Arg44 and Lys135. Substrate contacts are provided by His165, Lys169, Glu201, and Asp220. The active-site Proton acceptor is the His225. A substrate-binding site is contributed by Lys311.

Belongs to the glucose-6-phosphate dehydrogenase family.

The catalysed reaction is D-glucose 6-phosphate + NADP(+) = 6-phospho-D-glucono-1,5-lactone + NADPH + H(+). It participates in carbohydrate degradation; pentose phosphate pathway; D-ribulose 5-phosphate from D-glucose 6-phosphate (oxidative stage): step 1/3. Its function is as follows. Catalyzes the oxidation of glucose 6-phosphate to 6-phosphogluconolactone. In Helicobacter pylori (strain J99 / ATCC 700824) (Campylobacter pylori J99), this protein is Glucose-6-phosphate 1-dehydrogenase.